A 735-amino-acid chain; its full sequence is Protein-associating with the carboxyl-terminal domain of ezrin (735 aa).

A lipid anchor (N-myristoyl glycine) is attached at glycine 2. Residues 2 to 245 form the Protein kinase domain; it reads GSENSALKSY…LSTLLSHDFF (244 aa). HEAT repeat units lie at residues 194–249, 285–323, 333–370, and 372–409; these read FGAL…RNDF, LIAS…NAPG, LFQS…HFTQ, and QLKK…LLGP. Phosphoserine is present on serine 439. Disordered stretches follow at residues 505-545 and 604-648; these read LSDV…ASIH and VPLT…GLGL. The segment covering 528–538 has biased composition (acidic residues); that stretch reads WPDWSEPEEPE. Residues 547–735 form an interaction with EZR region; that stretch reads WPREPCDVAE…EELAWEDNNW (189 aa). Serine 701 carries the phosphoserine modification.

This sequence belongs to the protein kinase superfamily. In terms of assembly, interacts with EZR/VIL2 C-terminal domain. In terms of processing, may be myristoylated; myristoylation may target it to Golgi compartment.

The protein localises to the cytoplasm. The protein resides in the golgi apparatus. It is found in the cell projection. Its subcellular location is the lamellipodium. Functionally, may play a role in regulating cell adhesion/migration complexes in migrating cells. The chain is Protein-associating with the carboxyl-terminal domain of ezrin (Scyl3) from Mus musculus (Mouse).